The following is a 466-amino-acid chain: MGNYSRRRFLQGSLAIVAGNVLPCAAMAADNPPLWIPPLTSVGRGSPILLNARNVKKAFDNNKVDAWGFNGSYLGPTIKMKQNDFLRLTYRNNLSEAIAINIQGLQANGEVSGSINRNLAPNSSWSPIIQIKQSASTCWYHSDTIGRSAYQSYRGLIGMWIIEDEESKKNLLPNKYGENDIPLILQDISLNYDGQQVFNLEKNSFLGKQLFVNGQRNPFINVARGFIRLRLLNASVSRPYYLHLDNQQPFFKIASGLGFLPQPLEQKVLLLAPGERAEILVNTNQNKPLRLLAGDSANIIDKVRGWLGMSDHLQNNLVVELRPQGLASAFAQQKPTLPDAKLGLPLSPQKERHIHLSTQDAMINQRRFDPRRIDIFAQLNSVERWVLTADQATGFQLQGAKFLIEQQNGERNKKEMLAWTDTVWVEGETRILVQFDNPSSNSYPFIFGASNLLLADKGCMGLLVVQ.

A signal peptide (tat-type signal) is located at residues 1–28; that stretch reads MGNYSRRRFLQGSLAIVAGNVLPCAAMA.

The protein belongs to the FtsP family. Predicted to be exported by the Tat system. The position of the signal peptide cleavage has not been experimentally proven.

It is found in the periplasm. Functionally, cell division protein that is required for growth during stress conditions. May be involved in protecting or stabilizing the divisomal assembly under conditions of stress. The sequence is that of Cell division protein FtsP from Gallibacterium anatis (strain UMN179) (Pasteurella anatis).